The chain runs to 308 residues: Methionyl-tRNA formyltransferase (308 aa).

109–112 (SLLP) contacts (6S)-5,6,7,8-tetrahydrofolate.

This sequence belongs to the Fmt family.

It catalyses the reaction L-methionyl-tRNA(fMet) + (6R)-10-formyltetrahydrofolate = N-formyl-L-methionyl-tRNA(fMet) + (6S)-5,6,7,8-tetrahydrofolate + H(+). In terms of biological role, attaches a formyl group to the free amino group of methionyl-tRNA(fMet). The formyl group appears to play a dual role in the initiator identity of N-formylmethionyl-tRNA by promoting its recognition by IF2 and preventing the misappropriation of this tRNA by the elongation apparatus. In Methylococcus capsulatus (strain ATCC 33009 / NCIMB 11132 / Bath), this protein is Methionyl-tRNA formyltransferase.